We begin with the raw amino-acid sequence, 255 residues long: Triosephosphate isomerase (255 aa).

Asparagine 10 to lysine 12 provides a ligand contact to substrate. Residue histidine 96 is the Electrophile of the active site. The active-site Proton acceptor is glutamate 169. Substrate is bound by residues glycine 175, serine 214, and glycine 235–glycine 236.

It belongs to the triosephosphate isomerase family. As to quaternary structure, homodimer.

The protein resides in the cytoplasm. The catalysed reaction is D-glyceraldehyde 3-phosphate = dihydroxyacetone phosphate. It functions in the pathway carbohydrate biosynthesis; gluconeogenesis. The protein operates within carbohydrate degradation; glycolysis; D-glyceraldehyde 3-phosphate from glycerone phosphate: step 1/1. Its function is as follows. Involved in the gluconeogenesis. Catalyzes stereospecifically the conversion of dihydroxyacetone phosphate (DHAP) to D-glyceraldehyde-3-phosphate (G3P). This chain is Triosephosphate isomerase, found in Coxiella burnetii (strain Dugway 5J108-111).